The chain runs to 487 residues: CUGBP Elav-like family member 1 (487 aa).

Position 1 is an N-acetylmethionine (M1). Phosphothreonine is present on T4. RRM domains lie at I16–S99 and R108–T188. K109 participates in a covalent cross-link: Glycyl lysine isopeptide (Lys-Gly) (interchain with G-Cter in SUMO2). 2 positions are modified to phosphoserine: S179 and S303. Residues T277–V310 form a disordered region. A compositionally biased stretch (low complexity) spans A283–V310. Residues A402–S480 enclose the RRM 3 domain.

This sequence belongs to the CELF/BRUNOL family. Interacts with HNRNPH1; the interaction in RNA-dependent. Interacts with PARN. Component of an EIF2 complex at least composed of CELF1/CUGBP1, CALR, CALR3, EIF2S1, EIF2S2, HSP90B1 and HSPA5. Associates with polysomes.

The protein resides in the nucleus. It localises to the cytoplasm. Functionally, RNA-binding protein implicated in the regulation of several post-transcriptional events. Involved in pre-mRNA alternative splicing, mRNA translation and stability. Mediates exon inclusion and/or exclusion in pre-mRNA that are subject to tissue-specific and developmentally regulated alternative splicing. Specifically activates exon 5 inclusion of cardiac isoforms of TNNT2 during heart remodeling at the juvenile to adult transition. Acts both as an activator and as a repressor of a pair of coregulated exons: promotes inclusion of the smooth muscle (SM) exon but exclusion of the non-muscle (NM) exon in actinin pre-mRNAs. Activates SM exon 5 inclusion by antagonizing the repressive effect of PTB. Promotes exclusion of exon 11 of the INSR pre-mRNA. Inhibits, together with HNRNPH1, insulin receptor (IR) pre-mRNA exon 11 inclusion in myoblast. Increases translation and controls the choice of translation initiation codon of CEBPB mRNA. Increases mRNA translation of CEBPB in aging liver. Increases translation of CDKN1A mRNA by antagonizing the repressive effect of CALR3. Mediates rapid cytoplasmic mRNA deadenylation. Recruits the deadenylase PARN to the poly(A) tail of EDEN-containing mRNAs to promote their deadenylation. Required for completion of spermatogenesis. Binds to (CUG)n triplet repeats in the 3'-UTR of transcripts such as DMPK and to Bruno response elements (BREs). Binds to muscle-specific splicing enhancer (MSE) intronic sites flanking the alternative exon 5 of TNNT2 pre-mRNA. Binds to AU-rich sequences (AREs or EDEN-like) localized in the 3'-UTR of JUN and FOS mRNAs. Binds to the IR RNA. Binds to the 5'-region of CDKN1A and CEBPB mRNAs. Binds with the 5'-region of CEBPB mRNA in aging liver. May be a specific regulator of miRNA biogenesis. Binds to primary microRNA pri-MIR140 and, with CELF2, negatively regulates the processing to mature miRNA. The sequence is that of CUGBP Elav-like family member 1 (Celf1) from Rattus norvegicus (Rat).